A 239-amino-acid polypeptide reads, in one-letter code: Exosome complex component Rrp41 (239 aa).

Positions 1–21 are disordered; that stretch reads MEERPERLISEDGLRLDGRKP.

It belongs to the RNase PH family. Rrp41 subfamily. Component of the archaeal exosome complex. Forms a hexameric ring-like arrangement composed of 3 Rrp41-Rrp42 heterodimers. The hexameric ring associates with a trimer of Rrp4 and/or Csl4 subunits.

The protein localises to the cytoplasm. Its function is as follows. Catalytic component of the exosome, which is a complex involved in RNA degradation. Has 3'-&gt;5' exoribonuclease activity. Can also synthesize heteromeric RNA-tails. This Methanopyrus kandleri (strain AV19 / DSM 6324 / JCM 9639 / NBRC 100938) protein is Exosome complex component Rrp41.